The sequence spans 54 residues: U7-myrmicitoxin-Tb1a (54 aa).

An N-terminal signal peptide occupies residues methionine 1–alanine 26. Positions aspartate 27–alanine 36 are excised as a propeptide. Cysteines 40 and 49 form a disulfide.

Expressed by the venom gland.

It localises to the secreted. Functionally, venom protein with unknown function. Does not induce paralysis when a high dose is administered by intrathoracic injection into the blowfly Lucilia caesar. This chain is U7-myrmicitoxin-Tb1a, found in Tetramorium bicarinatum (Tramp ant).